Here is a 455-residue protein sequence, read N- to C-terminus: Neuronal acetylcholine receptor subunit beta-3 (455 aa).

An N-terminal signal peptide occupies residues 1–20 (MLCLMLCVLCWSRSDVAALG). Residues 21 to 229 (SVVENEDALL…VTYSFVLRRL (209 aa)) are Extracellular-facing. Residues Asn48 and Asn163 are each glycosylated (N-linked (GlcNAc...) asparagine). Cys150 and Cys164 are oxidised to a cystine. The next 3 helical transmembrane spans lie at 230–254 (PLFY…VFYL), 262–279 (LSLS…LLVI), and 296–317 (YLLF…VINV). Over 318 to 425 (HHRSSATYHP…WKFVAQVLDR (108 aa)) the chain is Cytoplasmic. A helical membrane pass occupies residues 426–444 (IFLWLFLVVSVTGSVLIFT).

This sequence belongs to the ligand-gated ion channel (TC 1.A.9) family. Acetylcholine receptor (TC 1.A.9.1) subfamily. Beta-3/CHRNB3 sub-subfamily. Neuronal AChR seems to be composed of two different type of subunits: alpha and beta. CHRNB3/beta-3 subunit is only able to form functional nAChRs when co-assembled with another beta subunit. Participates in pentameric assemblies along with CHRNA4/alpha-4 and CHRNB2/beta-2 subunits and with CHRNA6/alpha-6 as well, forming stoichiometries such as (CHRNA3:CHRNB4)2:CHRNB3, (CHRNA4:CHRNB2)2:CHRNB3 or (CHRNA6:CHRNB2)2:CHRNB3. Relatively abundant in the developing retina and in the trigeminal ganglion.

Its subcellular location is the synaptic cell membrane. It localises to the cell membrane. It carries out the reaction Ca(2+)(in) = Ca(2+)(out). It catalyses the reaction K(+)(in) = K(+)(out). The catalysed reaction is Na(+)(in) = Na(+)(out). Its activity is regulated as follows. Activated by a myriad of ligands such as acetylcholine, cytisine, nicotine, choline and epibatidine. Component of neuronal acetylcholine receptors (nAChRs) that function as pentameric, ligand-gated cation channels with high calcium permeability among other activities. nAChRs are excitatory neurotrasnmitter receptors formed by a collection of nAChR subunits known to mediate synaptic transmission in the nervous system and the neuromuscular junction. Each nAchR subunit confers differential attributes to channel properties, including activation, deactivation and desensitization kinetics, pH sensitivity, cation permeability, and binding to allosteric modulators. Has an accessory rather than functional role and is only able to form functional nAChRs when co-assembled with another beta subunit. Participates in pentameric assemblies along with CHRNA3, CHRNA4, CHRNA6, CHRNB2 and CHRNB4. Modulates receptor assembly and increases receptor sensitivity to nicotine when associated with CHRNB2, CHRNA4 and/or CHRNA6 as well as CHRNA3 and CHRNB4. Seems to play a role in nicotine addiction. The protein is Neuronal acetylcholine receptor subunit beta-3 (CHRNB3) of Gallus gallus (Chicken).